Here is a 406-residue protein sequence, read N- to C-terminus: Succinylornithine transaminase (406 aa).

Lysine 252 carries the N6-(pyridoxal phosphate)lysine modification.

It belongs to the class-III pyridoxal-phosphate-dependent aminotransferase family. AstC subfamily. Requires pyridoxal 5'-phosphate as cofactor.

The catalysed reaction is N(2)-succinyl-L-ornithine + 2-oxoglutarate = N-succinyl-L-glutamate 5-semialdehyde + L-glutamate. It functions in the pathway amino-acid degradation; L-arginine degradation via AST pathway; L-glutamate and succinate from L-arginine: step 3/5. Catalyzes the transamination of N(2)-succinylornithine and alpha-ketoglutarate into N(2)-succinylglutamate semialdehyde and glutamate. Can also act as an acetylornithine aminotransferase. The protein is Succinylornithine transaminase of Escherichia coli O127:H6 (strain E2348/69 / EPEC).